The primary structure comprises 316 residues: MRKRKVAIIGSGNIGTDLMIKILRHGQHLEMAVMVGIDPQSDGLARARRLGVATTHEGVGGLMQMAEFADIDFVFDATSAGAHIKNDAALREAKPGIRVIDLTPAAIGPYCVPVVNLADNLHQGNVNMVTCGGQATIPMVAAVSRVAKVHYAEIVASIASQSAGPGTRANIDEFTETTSQAIEKVGGAGKGKAIIVLNPAEPPLMMRDTVYILSELASQEAIAASIAEMAAAVQAYVPGYRLKQQVQFEVIPEDRPVNLPGVGCFSGLKTAVYLEVEGAAHYLPAYAGNLDIMTSAALATAEQMAGAMHSAAGATA.

Residue 11–14 (SGNI) coordinates NAD(+). Residue Cys-131 is the Acyl-thioester intermediate of the active site. NAD(+) contacts are provided by residues 162 to 170 (SAGPGTRAN) and Asn-289.

This sequence belongs to the acetaldehyde dehydrogenase family. Interacts with MhpE.

It carries out the reaction acetaldehyde + NAD(+) + CoA = acetyl-CoA + NADH + H(+). It functions in the pathway aromatic compound metabolism; 3-phenylpropanoate degradation. Catalyzes the conversion of acetaldehyde to acetyl-CoA, using NAD(+) and coenzyme A. Is the final enzyme in the meta-cleavage pathway for the degradation of aromatic compounds. This is Acetaldehyde dehydrogenase from Klebsiella pneumoniae subsp. pneumoniae (strain ATCC 700721 / MGH 78578).